Consider the following 360-residue polypeptide: Alanine racemase (360 aa).

Lys-36 functions as the Proton acceptor; specific for D-alanine in the catalytic mechanism. Residue Lys-36 is modified to N6-(pyridoxal phosphate)lysine. Arg-132 is a binding site for substrate. Tyr-256 (proton acceptor; specific for L-alanine) is an active-site residue. Residue Met-304 participates in substrate binding.

This sequence belongs to the alanine racemase family. Pyridoxal 5'-phosphate is required as a cofactor.

The enzyme catalyses L-alanine = D-alanine. It participates in amino-acid biosynthesis; D-alanine biosynthesis; D-alanine from L-alanine: step 1/1. Functionally, catalyzes the interconversion of L-alanine and D-alanine. May also act on other amino acids. The protein is Alanine racemase (alr) of Pasteurella multocida (strain Pm70).